The following is a 123-amino-acid chain: Diacylglycerol kinase (123 aa).

The chain crosses the membrane as a helical span at residues 15–32; it reads ILNATGYSLAGFLAAFRG. Glutamate 33 serves as a coordination point for a divalent metal cation. The next 3 helical transmembrane spans lie at 35-55, 61-81, and 102-122; these read AFRQ…LLDV, ALMI…SAIE, and GSAA…TILL. Glutamate 74 acts as the Proton acceptor in catalysis. Glutamate 81 contacts a divalent metal cation.

Belongs to the bacterial diacylglycerol kinase family. The cofactor is Mg(2+).

The protein localises to the cell inner membrane. The catalysed reaction is a 1,2-diacyl-sn-glycerol + ATP = a 1,2-diacyl-sn-glycero-3-phosphate + ADP + H(+). Its function is as follows. Catalyzes the ATP-dependent phosphorylation of sn-l,2-diacylglycerol (DAG) to phosphatidic acid. Involved in the recycling of diacylglycerol produced as a by-product during membrane-derived oligosaccharide (MDO) biosynthesis. The sequence is that of Diacylglycerol kinase (dgkA) from Pseudomonas aeruginosa (strain ATCC 15692 / DSM 22644 / CIP 104116 / JCM 14847 / LMG 12228 / 1C / PRS 101 / PAO1).